The primary structure comprises 232 residues: Peptidoglycan-recognition protein LB (232 aa).

The signal sequence occupies residues 1–15 (MTALGLVLLSMMGYS). An N-acetylmuramoyl-L-alanine amidase domain is found at 53-179 (APYVIIHHSY…RQVRDTECPG (127 aa)). Zn(2+) is bound at residue H59. A disulfide bond links C67 and C73. Zn(2+) contacts are provided by H169 and C177. An N-linked (GlcNAc...) asparagine glycan is attached at N196. The interval 213–232 (HPQAAAPQKPHQSPPAAPKV) is disordered.

The protein belongs to the N-acetylmuramoyl-L-alanine amidase 2 family. Monomer. Requires Zn(2+) as cofactor. In terms of tissue distribution, widely expressed.

It is found in the secreted. The enzyme catalyses Hydrolyzes the link between N-acetylmuramoyl residues and L-amino acid residues in certain cell-wall glycopeptides.. N-acetylmuramyl-L-alanine amidase involved in innate immunity by degrading bacterial peptidoglycans (PGN). Probably plays a scavenger role by digesting biologically active PGN into biologically inactive fragments. Has no direct bacteriolytic activity. The protein is Peptidoglycan-recognition protein LB (PGRP-LB) of Drosophila melanogaster (Fruit fly).